Consider the following 103-residue polypeptide: MTLRDLINKLLGRQQASAARARERLQLVLAHDRTDLSPDLLDQMREEILSVVAKYVEIDVEEGAVSLETEDRMTALVANLPIKRTLSGDIKLKEQSTESSASK.

The protein belongs to the MinE family.

Its function is as follows. Prevents the cell division inhibition by proteins MinC and MinD at internal division sites while permitting inhibition at polar sites. This ensures cell division at the proper site by restricting the formation of a division septum at the midpoint of the long axis of the cell. This is Cell division topological specificity factor from Prochlorococcus marinus (strain MIT 9211).